A 174-amino-acid polypeptide reads, in one-letter code: UPF0316 protein Dhaf_3052 (174 aa).

3 consecutive transmembrane segments (helical) span residues 4–24, 35–55, and 59–79; these read ILQFVLIIITINITYVTLTTI, VYASLLSVLEVFIYIMGLSII, and LDSYWNIAAYCCGYGVGVYLG.

This sequence belongs to the UPF0316 family.

The protein resides in the cell membrane. This chain is UPF0316 protein Dhaf_3052, found in Desulfitobacterium hafniense (strain DSM 10664 / DCB-2).